The following is a 393-amino-acid chain: Formate-dependent phosphoribosylglycinamide formyltransferase (393 aa).

Residues 20-21 and glutamate 80 contribute to the N(1)-(5-phospho-beta-D-ribosyl)glycinamide site; that span reads EL. Residues arginine 112, lysine 153, 158-163, 193-196, and glutamate 201 contribute to the ATP site; these read SSGKGQ and EAFI. One can recognise an ATP-grasp domain in the interval 117–306; the sequence is RLAAEDLNLP…EFELHVRAVL (190 aa). 2 residues coordinate Mg(2+): glutamate 265 and glutamate 277. N(1)-(5-phospho-beta-D-ribosyl)glycinamide-binding positions include aspartate 284, lysine 354, and 361–362; that span reads RR.

Belongs to the PurK/PurT family. As to quaternary structure, homodimer.

It catalyses the reaction N(1)-(5-phospho-beta-D-ribosyl)glycinamide + formate + ATP = N(2)-formyl-N(1)-(5-phospho-beta-D-ribosyl)glycinamide + ADP + phosphate + H(+). The protein operates within purine metabolism; IMP biosynthesis via de novo pathway; N(2)-formyl-N(1)-(5-phospho-D-ribosyl)glycinamide from N(1)-(5-phospho-D-ribosyl)glycinamide (formate route): step 1/1. Its function is as follows. Involved in the de novo purine biosynthesis. Catalyzes the transfer of formate to 5-phospho-ribosyl-glycinamide (GAR), producing 5-phospho-ribosyl-N-formylglycinamide (FGAR). Formate is provided by PurU via hydrolysis of 10-formyl-tetrahydrofolate. The sequence is that of Formate-dependent phosphoribosylglycinamide formyltransferase from Syntrophotalea carbinolica (strain DSM 2380 / NBRC 103641 / GraBd1) (Pelobacter carbinolicus).